The chain runs to 296 residues: D-alanine--D-alanine ligase (296 aa).

The region spanning 103 to 293 (KEILMHYRMP…FDSFVKRIIE (191 aa)) is the ATP-grasp domain. 129 to 180 (ISFPVAVKPSSGGSSIATFKVKSIQELKHAYEEASKYGEVMIEQWVTGKEIT) contacts ATP. The Mg(2+) site is built by D247, E260, and N262.

It belongs to the D-alanine--D-alanine ligase family. Mg(2+) serves as cofactor. Mn(2+) is required as a cofactor.

The protein localises to the cytoplasm. The catalysed reaction is 2 D-alanine + ATP = D-alanyl-D-alanine + ADP + phosphate + H(+). The protein operates within cell wall biogenesis; peptidoglycan biosynthesis. In terms of biological role, cell wall formation. In Francisella tularensis subsp. tularensis (strain WY96-3418), this protein is D-alanine--D-alanine ligase.